The sequence spans 544 residues: Probable acyl-activating enzyme 8 (544 aa).

This sequence belongs to the ATP-dependent AMP-binding enzyme family. As to expression, expressed at low levels in roots, leaves, stems, flowers and developing seeds.

Its function is as follows. May act as an acid--thiol ligase that activates carboxylic acids by forming acyl-CoAs. The sequence is that of Probable acyl-activating enzyme 8 (AAE8) from Arabidopsis thaliana (Mouse-ear cress).